Here is a 671-residue protein sequence, read N- to C-terminus: Zinc finger protein 750 (671 aa).

The CCHC-type zinc-finger motif lies at 25–51 (YKCFQCPFTCNEKSHLFNHMKYGLCKN). The Zn(2+) site is built by cysteine 27, cysteine 30, histidine 43, and cysteine 49. Disordered regions lie at residues 66-87 (PKVN…SPVP), 366-433 (ETSP…KDFT), and 592-671 (SSPG…PRVS). Polar residues-rich tracts occupy residues 67 to 78 (KVNSTDQKQPSN) and 402 to 412 (SPTNFTQNSQG).

Its subcellular location is the nucleus. Transcription factor involved in epidermis differentiation. In Xenopus tropicalis (Western clawed frog), this protein is Zinc finger protein 750 (znf750).